The chain runs to 313 residues: Ribosomal RNA small subunit methyltransferase H (313 aa).

Residues 35–37 (GGH), Asp-55, Phe-80, Asp-102, and Gln-109 contribute to the S-adenosyl-L-methionine site.

The protein belongs to the methyltransferase superfamily. RsmH family.

Its subcellular location is the cytoplasm. The enzyme catalyses cytidine(1402) in 16S rRNA + S-adenosyl-L-methionine = N(4)-methylcytidine(1402) in 16S rRNA + S-adenosyl-L-homocysteine + H(+). Specifically methylates the N4 position of cytidine in position 1402 (C1402) of 16S rRNA. This is Ribosomal RNA small subunit methyltransferase H from Shewanella amazonensis (strain ATCC BAA-1098 / SB2B).